We begin with the raw amino-acid sequence, 151 residues long: MKLILTAEVEHLGAAGDTVEVKDGYGRNYLLPRGLAIVASRGAERQAEEIRRARESKVIRDIEHANELKTALEGLGDVTLSVNAAGDTGKLFGSVTAADVVNAIKKAGGPNLDKRTVQLAKAHIKSVGTHPVTVKLHTGVEAKVSLNVVAQ.

The protein belongs to the bacterial ribosomal protein bL9 family.

Binds to the 23S rRNA. The protein is Large ribosomal subunit protein bL9 of Mycolicibacterium smegmatis (strain ATCC 700084 / mc(2)155) (Mycobacterium smegmatis).